We begin with the raw amino-acid sequence, 885 residues long: DNA mismatch repair protein MutS (885 aa).

626–633 (GPNMGGKS) provides a ligand contact to ATP.

The protein belongs to the DNA mismatch repair MutS family.

In terms of biological role, this protein is involved in the repair of mismatches in DNA. It is possible that it carries out the mismatch recognition step. This protein has a weak ATPase activity. The sequence is that of DNA mismatch repair protein MutS from Burkholderia lata (strain ATCC 17760 / DSM 23089 / LMG 22485 / NCIMB 9086 / R18194 / 383).